The following is a 210-amino-acid chain: dITP/XTP pyrophosphatase (210 aa).

16-21 contacts substrate; it reads SNNKGK. Aspartate 79 acts as the Proton acceptor in catalysis. Aspartate 79 provides a ligand contact to Mg(2+). Substrate is bound by residues serine 80, 166-169, lysine 189, and 194-195; these read FGYD and HR.

It belongs to the HAM1 NTPase family. As to quaternary structure, homodimer. The cofactor is Mg(2+).

The catalysed reaction is XTP + H2O = XMP + diphosphate + H(+). It catalyses the reaction dITP + H2O = dIMP + diphosphate + H(+). It carries out the reaction ITP + H2O = IMP + diphosphate + H(+). Its function is as follows. Pyrophosphatase that catalyzes the hydrolysis of nucleoside triphosphates to their monophosphate derivatives, with a high preference for the non-canonical purine nucleotides XTP (xanthosine triphosphate), dITP (deoxyinosine triphosphate) and ITP. Seems to function as a house-cleaning enzyme that removes non-canonical purine nucleotides from the nucleotide pool, thus preventing their incorporation into DNA/RNA and avoiding chromosomal lesions. In Acinetobacter baylyi (strain ATCC 33305 / BD413 / ADP1), this protein is dITP/XTP pyrophosphatase.